The sequence spans 335 residues: Galactosylgalactosylxylosylprotein 3-beta-glucuronosyltransferase 3 (335 aa).

The Cytoplasmic segment spans residues 1–7 (MKLKLKN). The helical; Signal-anchor for type II membrane protein transmembrane segment at 8-28 (VFLAYFLVSIAGLLYALVQLG) threads the bilayer. At 29–335 (QPCDCLPPLR…GRGSDPAIEV (307 aa)) the chain is on the lumenal side. Residues 82 to 84 (PTY), Asp113, Arg156, Arg161, and 194 to 196 (DDD) each bind UDP-alpha-D-glucuronate. Asp196 is a binding site for Mn(2+). An interaction with galactose moiety of substrate glycoprotein region spans residues 243–252 (WEPSRPFPVD). Catalysis depends on Glu281, which acts as the Proton donor/acceptor. N-linked (GlcNAc...) asparagine glycosylation is present at Asn300. Residue 308-310 (HTR) participates in UDP-alpha-D-glucuronate binding. Over residues 312 to 322 (EKPKMKQEEQL) the composition is skewed to basic and acidic residues. The interval 312-335 (EKPKMKQEEQLQRQGRGSDPAIEV) is disordered.

It belongs to the glycosyltransferase 43 family. Homodimer; disulfide-linked. Interacts with PXYLP1; the interaction increases the 2-phosphoxylose phosphatase activity of PXYLP1 during completion of linkage region formation in a B3GAT3-mediated manner. The cofactor is Mn(2+). Post-translationally, N-glycosylated. In terms of tissue distribution, ubiquitous (but weakly expressed in all tissues examined).

It is found in the golgi apparatus membrane. The protein localises to the golgi apparatus. It localises to the cis-Golgi network. The catalysed reaction is 3-O-(beta-D-galactosyl-(1-&gt;3)-beta-D-galactosyl-(1-&gt;4)-beta-D-xylosyl)-L-seryl-[protein] + UDP-alpha-D-glucuronate = 3-O-(beta-D-GlcA-(1-&gt;3)-beta-D-Gal-(1-&gt;3)-beta-D-Gal-(1-&gt;4)-beta-D-Xyl)-L-seryl-[protein] + UDP + H(+). The protein operates within protein modification; protein glycosylation. With respect to regulation, inhibited by EDTA. In terms of biological role, glycosaminoglycans biosynthesis. Involved in forming the linkage tetrasaccharide present in heparan sulfate and chondroitin sulfate. Transfers a glucuronic acid moiety from the uridine diphosphate-glucuronic acid (UDP-GlcUA) to the common linkage region trisaccharide Gal-beta-1,3-Gal-beta-1,4-Xyl covalently bound to a Ser residue at the glycosaminylglycan attachment site of proteoglycans. Can also play a role in the biosynthesis of l2/HNK-1 carbohydrate epitope on glycoproteins. Shows strict specificity for Gal-beta-1,3-Gal-beta-1,4-Xyl, exhibiting negligible incorporation into other galactoside substrates including Galbeta1-3Gal beta1-O-benzyl, Galbeta1-4GlcNAc and Galbeta1-4Glc. Stimulates 2-phosphoxylose phosphatase activity of PXYLP1 in presence of uridine diphosphate-glucuronic acid (UDP-GlcUA) during completion of linkage region formation. The chain is Galactosylgalactosylxylosylprotein 3-beta-glucuronosyltransferase 3 (B3GAT3) from Homo sapiens (Human).